The following is a 288-amino-acid chain: Aminoglycoside 6-adenylyltransferase (288 aa).

The catalysed reaction is streptomycin + ATP = 6-O-adenylylstreptomycin + diphosphate. Functionally, mediates bacterial resistance to streptomycin, is probably a streptomycin 6-adenylyltransferase. The sequence is that of Aminoglycoside 6-adenylyltransferase from Campylobacter jejuni.